The primary structure comprises 200 residues: Outer-membrane lipoprotein carrier protein (200 aa).

Residues 1–18 form the signal peptide; sequence MIGLFLAAPLVLSSAVWA.

This sequence belongs to the LolA family. As to quaternary structure, monomer.

The protein localises to the periplasm. In terms of biological role, participates in the translocation of lipoproteins from the inner membrane to the outer membrane. Only forms a complex with a lipoprotein if the residue after the N-terminal Cys is not an aspartate (The Asp acts as a targeting signal to indicate that the lipoprotein should stay in the inner membrane). This Photobacterium profundum (strain SS9) protein is Outer-membrane lipoprotein carrier protein.